The following is a 373-amino-acid chain: MWPLRVYTRKKREGQRLNLTPTPDLGSPAKAEAPPGSKRKGKVHGLSKIAEKAERSRQGGSGSGPFSPRLGVTGEKSLQENRSSEDTQDEKIASLRESVTDDLQVDSSSSNSELVSGLSLHHGMASSLLSYSVTDSYAEYKSFEESFPSPELFRKSDYLDWECPNLEEHMQWKNSTLLDTSKAVAIEKAPQFSNVSAIFSTSSEDYQKCHRKTVMTVADQNVSPKAKCASNSESDNAACEILLAEKTCPSTPEKTKKKKTNSSTPGKKNRGLLTSTPSSETAGFVIDLSSVQKASFEELFPNVSNYVNSNEIVPVSSLQENSSNEFPANASEICCIIRTSPGTRQVKNKGVIVKKKKYSLPKDTPQDIIIKMA.

Disordered stretches follow at residues 1 to 91 and 250 to 276; these read MWPL…QDEK and STPEKTKKKKTNSSTPGKKNRGLLTST. The span at 77 to 91 shows a compositional bias: basic and acidic residues; sequence SLQENRSSEDTQDEK. Positions 275–277 match the POLO box domain (PBD)-binding motif; it reads STP. The segment at 332-335 is required for localization to kinetochores; sequence EICC.

In terms of assembly, interacts with CENPC. Interacts with PLK1; required for recruitment of PLK1 at kinetochores.

Its subcellular location is the chromosome. It is found in the centromere. The protein localises to the kinetochore. In terms of biological role, key regulator of kinetochore function during meiosis I: required both for mono-orientation of kinetochores on sister chromosomes and protection of centromeric cohesin from separase-mediated cleavage. Acts by facilitating kinetochore mono-orientation during meiosis I, when kinetochores on sister chromosomes face the same direction and are thus captured and pulled by spindle fibers from the same pole. Also required to prevent cleavage of cohesin at centromeres during meiosis I, possibly by acting as a regulator of the shugoshin-dependent protection pathway. Acts in collaboration with PLK1: required for PLK1 enrichment to kinetochores. Not required during meiosis II or mitosis. The sequence is that of Meiosis-specific kinetochore protein from Homo sapiens (Human).